Consider the following 638-residue polypeptide: Polypeptide N-acetylgalactosaminyltransferase 15 (638 aa).

Residues 1–12 (MLPRKRPRSGRS) are Cytoplasmic-facing. The helical; Signal-anchor for type II membrane protein transmembrane segment at 13 to 35 (RLQFLLLFLTLGCVLMMVILLHP) threads the bilayer. The Lumenal portion of the chain corresponds to 36-638 (PPPTLHQAVT…FDQIHPVDER (603 aa)). A disordered region spans residues 134–157 (KDWRTEEDGEESEEVLTPLGPDSD). 5 cysteine pairs are disulfide-bonded: Cys-181–Cys-411, Cys-402–Cys-481, Cys-516–Cys-535, Cys-561–Cys-574, and Cys-602–Cys-619. Residues 190–299 (LPTASVILCF…PGWLEPLLSR (110 aa)) are catalytic subdomain A. Positions 231 and 260 each coordinate substrate. Residues Asp-283, His-285, and His-416 each contribute to the Mn(2+) site. The segment at 357 to 419 (PVRSPVVPRE…PCSRVGHIYR (63 aa)) is catalytic subdomain B. Residue Arg-419 coordinates substrate. In terms of domain architecture, Ricin B-type lectin spans 503–630 (RFSGKLHNTG…GKTSQLWRFD (128 aa)). An N-linked (GlcNAc...) asparagine glycan is attached at Asn-573.

This sequence belongs to the glycosyltransferase 2 family. GalNAc-T subfamily. It depends on Mn(2+) as a cofactor. As to expression, specifically expressed in testis.

It is found in the golgi apparatus membrane. The enzyme catalyses L-seryl-[protein] + UDP-N-acetyl-alpha-D-galactosamine = a 3-O-[N-acetyl-alpha-D-galactosaminyl]-L-seryl-[protein] + UDP + H(+). It catalyses the reaction L-threonyl-[protein] + UDP-N-acetyl-alpha-D-galactosamine = a 3-O-[N-acetyl-alpha-D-galactosaminyl]-L-threonyl-[protein] + UDP + H(+). It functions in the pathway protein modification; protein glycosylation. In terms of biological role, catalyzes the initial reaction in O-linked oligosaccharide biosynthesis, the transfer of an N-acetyl-D-galactosamine residue to a serine or threonine residue on the protein receptor. Although it displays a much weaker activity toward all substrates tested compared to GALNT2, it is able to transfer up to seven GalNAc residues to the Muc5AC peptide, suggesting that it can fill vicinal Thr/Ser residues in cooperation with other GALNT proteins. Prefers Muc1a as substrate. The chain is Polypeptide N-acetylgalactosaminyltransferase 15 (Galnt15) from Mus musculus (Mouse).